Here is a 126-residue protein sequence, read N- to C-terminus: Holo-[acyl-carrier-protein] synthase (126 aa).

Mg(2+) is bound by residues Asp9 and Glu58.

The protein belongs to the P-Pant transferase superfamily. AcpS family. Mg(2+) serves as cofactor.

The protein localises to the cytoplasm. The enzyme catalyses apo-[ACP] + CoA = holo-[ACP] + adenosine 3',5'-bisphosphate + H(+). In terms of biological role, transfers the 4'-phosphopantetheine moiety from coenzyme A to a Ser of acyl-carrier-protein. In Vibrio vulnificus (strain CMCP6), this protein is Holo-[acyl-carrier-protein] synthase.